We begin with the raw amino-acid sequence, 462 residues long: MTNFDNLTPKEIVRELDKYIIGQYQAKKAVAIAIRNRIRRQKLPDIWQKEVLPKNILMIGPTGVGKTEIARRLAQLSGSPFLKVEATRFTEVGYVGKNVDSMVRDLVEISVNMVKKERMEQVKDKAEQMVEERILDALIPESRKPQNISFMGLFTASQQQQPSPEERRSLRQKREEIRQKLRNGELENEMIEIEIEKEISPFIGALGQGELEDLGIDLGSMLGSLMPKTRQKKRMTVSEARRTLLPIESEKLIDMDKATQEALERAQNRGIIFIDELDKIAVKSSGSGPDVSRQGVQRDLLPIVEGTTIMTKYGPVRTDYILFIGSGAFHMSRPSDLIPELQGRFPIRVELSSLTRKDFVRILVEPENAITKQYQALLSTEGIELIFTEDGIEEMAKIAYELNQRLENIGARRLYTVVEKVLEEISFEAPDVQEKKIIIDAKYVMGKLENIISDEDVSSYIL.

Residues Ile21, 63-68 (GVGKTE), Asp275, Glu340, and Arg412 contribute to the ATP site.

It belongs to the ClpX chaperone family. HslU subfamily. In terms of assembly, a double ring-shaped homohexamer of HslV is capped on each side by a ring-shaped HslU homohexamer. The assembly of the HslU/HslV complex is dependent on binding of ATP.

It localises to the cytoplasm. In terms of biological role, ATPase subunit of a proteasome-like degradation complex; this subunit has chaperone activity. The binding of ATP and its subsequent hydrolysis by HslU are essential for unfolding of protein substrates subsequently hydrolyzed by HslV. HslU recognizes the N-terminal part of its protein substrates and unfolds these before they are guided to HslV for hydrolysis. The sequence is that of ATP-dependent protease ATPase subunit HslU from Pseudothermotoga lettingae (strain ATCC BAA-301 / DSM 14385 / NBRC 107922 / TMO) (Thermotoga lettingae).